A 72-amino-acid polypeptide reads, in one-letter code: Translation initiation factor IF-1 (72 aa).

The region spanning 1–72 is the S1-like domain; that stretch reads MAKEELLEFP…TKGRITYRFK (72 aa).

This sequence belongs to the IF-1 family. Component of the 30S ribosomal translation pre-initiation complex which assembles on the 30S ribosome in the order IF-2 and IF-3, IF-1 and N-formylmethionyl-tRNA(fMet); mRNA recruitment can occur at any time during PIC assembly.

It is found in the cytoplasm. One of the essential components for the initiation of protein synthesis. Stabilizes the binding of IF-2 and IF-3 on the 30S subunit to which N-formylmethionyl-tRNA(fMet) subsequently binds. Helps modulate mRNA selection, yielding the 30S pre-initiation complex (PIC). Upon addition of the 50S ribosomal subunit IF-1, IF-2 and IF-3 are released leaving the mature 70S translation initiation complex. In Maricaulis maris (strain MCS10) (Caulobacter maris), this protein is Translation initiation factor IF-1.